The sequence spans 211 residues: Large ribosomal subunit protein eL13 (211 aa).

Belongs to the eukaryotic ribosomal protein eL13 family. In terms of assembly, component of the 60S large ribosomal subunit (LSU).

The protein resides in the cytoplasm. Functionally, component of the ribosome, a large ribonucleoprotein complex responsible for the synthesis of proteins in the cell. The small ribosomal subunit (SSU) binds messenger RNAs (mRNAs) and translates the encoded message by selecting cognate aminoacyl-transfer RNA (tRNA) molecules. The large subunit (LSU) contains the ribosomal catalytic site termed the peptidyl transferase center (PTC), which catalyzes the formation of peptide bonds, thereby polymerizing the amino acids delivered by tRNAs into a polypeptide chain. The nascent polypeptides leave the ribosome through a tunnel in the LSU and interact with protein factors that function in enzymatic processing, targeting, and the membrane insertion of nascent chains at the exit of the ribosomal tunnel. As part of the LSU, it is probably required for its formation and the maturation of rRNAs. This Gallus gallus (Chicken) protein is Large ribosomal subunit protein eL13 (RPL13).